We begin with the raw amino-acid sequence, 100 residues long: Integration host factor subunit beta (100 aa).

It belongs to the bacterial histone-like protein family. In terms of assembly, heterodimer of an alpha and a beta chain.

Its function is as follows. This protein is one of the two subunits of integration host factor, a specific DNA-binding protein that functions in genetic recombination as well as in transcriptional and translational control. The chain is Integration host factor subunit beta from Agrobacterium fabrum (strain C58 / ATCC 33970) (Agrobacterium tumefaciens (strain C58)).